The primary structure comprises 272 residues: tRNA (guanine-N(7)-)-methyltransferase (272 aa).

Residues 1–20 (MSTDSESKRRAYREEKEGAR) show a composition bias toward basic and acidic residues. Residues 1 to 43 (MSTDSESKRRAYREEKEGARKKSVKLAPEATPESKPDLPRKRY) are disordered. Residues glycine 89, 112–113 (EI), 148–149 (NA), and cysteine 168 contribute to the S-adenosyl-L-methionine site. Aspartate 171 is an active-site residue. 246–248 (TEE) provides a ligand contact to S-adenosyl-L-methionine.

It belongs to the class I-like SAM-binding methyltransferase superfamily. TrmB family. In terms of assembly, forms a complex with TRM82.

It localises to the nucleus. The catalysed reaction is guanosine(46) in tRNA + S-adenosyl-L-methionine = N(7)-methylguanosine(46) in tRNA + S-adenosyl-L-homocysteine. The protein operates within tRNA modification; N(7)-methylguanine-tRNA biosynthesis. Catalyzes the formation of N(7)-methylguanine at position 46 (m7G46) in tRNA. The polypeptide is tRNA (guanine-N(7)-)-methyltransferase (Meyerozyma guilliermondii (strain ATCC 6260 / CBS 566 / DSM 6381 / JCM 1539 / NBRC 10279 / NRRL Y-324) (Yeast)).